A 161-amino-acid polypeptide reads, in one-letter code: MIIEKILGNLHELPASEAGAFAGLHQEKVVLPSAQLVKRIQRVTTDHGKELGIRLPAGSGDLRDGDILHVAETNMIVISVLPTDVLVVAPRSIHEMGVVAHSLGNRHLQAQFFDAGSEYAADVMVCQYDHTVEDYLKHVGVPYERQERVMPVPFRHAEHSH.

The protein belongs to the UreE family.

It is found in the cytoplasm. Involved in urease metallocenter assembly. Binds nickel. Probably functions as a nickel donor during metallocenter assembly. The chain is Urease accessory protein UreE from Arthrobacter sp. (strain FB24).